A 98-amino-acid chain; its full sequence is HssA/B-like protein 39 (98 aa).

The interval 1-21 is disordered; the sequence is MTLFSSISSMSTSMSGSKSSI.

It belongs to the hssA/B family.

This is HssA/B-like protein 39 (hssl39) from Dictyostelium discoideum (Social amoeba).